The following is a 176-amino-acid chain: MEQATLGGGCFWCLEAVYQMVEGIESVVSGYAAGQTKNPDYRSVCSGTTGHAETVQITFDSKVISYFEILEIFWISHDPTTLNRQGNDVGTQYRSIILYHSPEQKKQAEQSIQKAGEHFSDPIVTQVEILKEFYPAEDYHQNYFRTNPKQAYCHYVIKPKIDKYLKTGFKVKKEGS.

C10 is an active-site residue.

Belongs to the MsrA Met sulfoxide reductase family.

It carries out the reaction L-methionyl-[protein] + [thioredoxin]-disulfide + H2O = L-methionyl-(S)-S-oxide-[protein] + [thioredoxin]-dithiol. It catalyses the reaction [thioredoxin]-disulfide + L-methionine + H2O = L-methionine (S)-S-oxide + [thioredoxin]-dithiol. Functionally, has an important function as a repair enzyme for proteins that have been inactivated by oxidation. Catalyzes the reversible oxidation-reduction of methionine sulfoxide in proteins to methionine. The polypeptide is Peptide methionine sulfoxide reductase MsrA (Leptospira borgpetersenii serovar Hardjo-bovis (strain JB197)).